Here is a 1124-residue protein sequence, read N- to C-terminus: Regulator of nonsense transcripts 1 (1124 aa).

A sufficient for interaction with RENT2 region spans residues 1-410 (MSVEAYGPSS…LRSSVGAPVE (410 aa)). Phosphoserine occurs at positions 10 and 31. Positions 39–69 (TLPSQTQTPPGGPGGAGGPGGAGAGGAAGQL) are disordered. The segment covering 51–66 (PGGAGGPGGAGAGGAA) has biased composition (gly residues). Residues 110-267 (TKDLPVHACS…NKLEELWKEN (158 aa)) form the Upf1 CH-rich domain. Zn(2+) contacts are provided by C118, C121, C132, S135, C140, H150, H154, C160, C178, C181, C204, and C208. A C3H region spans residues 118-150 (CSYCGIHDPACVVYCNTSKKWFCNGRGNTSGSH). Positions 132 to 160 (CNTSKKWFCNGRGNTSGSHIVNHLVRAKC) are CC/SHH/C. The tract at residues 178–208 (CYNCGCRNVFLLGFIPAKADSVVVLLCRQPC) is C4. ATP contacts are provided by residues Q481 and 501-505 (GTGKT). Phosphoserine is present on S560. ATP-binding residues include Q671, Y708, and E839. Position 951 is a phosphoserine (S951). Disordered stretches follow at residues 1004-1053 (FGQA…VASQ) and 1066-1091 (SMSQ…YLGD). At R1014 the chain carries Omega-N-methylarginine. The span at 1020–1029 (KTGRGGRQKN) shows a compositional bias: basic residues. Residues 1036 to 1053 (PSQTTLPNSQASQDVASQ) show a composition bias toward polar residues. The span at 1066-1081 (SMSQPSQMSQPGLSQP) shows a compositional bias: low complexity. Phosphoserine is present on residues S1084, S1102, S1105, and S1122. Short sequence motifs ([ST]-Q motif) lie at residues 1084–1085 (SQ) and 1102–1103 (SQ). The interval 1105 to 1124 (STYQGERAYQHGGVTGLSQY) is disordered.

This sequence belongs to the DNA2/NAM7 helicase family. As to quaternary structure, found in a post-splicing messenger ribonucleoprotein (mRNP) complex. Associates with the exon junction complex (EJC). Associates with the SGM1C complex; is phosphorylated by the complex kinase component SGM1. Part of a complex composed of SMG1, DHX34 and UPF1; within the complex DHX34 acts as a scaffolding protein to facilitate SMG1 phosphorylation of UPF1. Interacts with UPF2. Interacts with UPF3A and UPF3B. Interacts with EST1A. Interacts with SLBP. Interacts (when hyperphosphorylated) with PNRC2. Interacts with AGO1 and AGO2. Interacts with GSPT2. Interacts with isoform 1 and isoform 5 of ADAR/ADAR1. Interacts with SMG7. Interacts with ZC3H12A; this interaction occurs in a mRNA translationally active- and termination-dependent manner and is essential for ZC3H12A-mediated degradation of target mRNAs. Interacts with CPSF6. Interacts with MOV10; the interaction is direct and RNA-dependent. Interacts with SHFL; the interaction increases in the presence of RNA. Interacts with UPF2 and DDX4; interactions are mediated by TDRD6. Interacts with DHX34 and PABPC1/PABP1; the interactions are RNA-independent. Interacts with RBM46. Phosphorylated by SMG1; required for formation of mRNA surveillance complexes. Localizes in male germ cells.

It is found in the cytoplasm. Its subcellular location is the P-body. It localises to the nucleus. The protein localises to the perinuclear region. It carries out the reaction ATP + H2O = ADP + phosphate + H(+). In terms of biological role, RNA-dependent helicase required for nonsense-mediated decay (NMD) of aberrant mRNAs containing premature stop codons and modulates the expression level of normal mRNAs. Is recruited to mRNAs upon translation termination and undergoes a cycle of phosphorylation and dephosphorylation; its phosphorylation appears to be a key step in NMD. Recruited by release factors to stalled ribosomes together with the SMG1C protein kinase complex to form the transient SURF (SMG1-UPF1-eRF1-eRF3) complex. In EJC-dependent NMD, the SURF complex associates with the exon junction complex (EJC) (located 50-55 or more nucleotides downstream from the termination codon) through UPF2 and allows the formation of an UPF1-UPF2-UPF3 surveillance complex which is believed to activate NMD. Phosphorylated UPF1 is recognized by EST1B/SMG5, SMG6 and SMG7 which are thought to provide a link to the mRNA degradation machinery involving exonucleolytic and endonucleolytic pathways, and to serve as adapters to protein phosphatase 2A (PP2A), thereby triggering UPF1 dephosphorylation and allowing the recycling of NMD factors. UPF1 can also activate NMD without UPF2 or UPF3, and in the absence of the NMD-enhancing downstream EJC indicative for alternative NMD pathways. Plays a role in replication-dependent histone mRNA degradation at the end of phase S; the function is independent of UPF2. For the recognition of premature termination codons (PTC) and initiation of NMD a competitive interaction between UPF1 and PABPC1 with the ribosome-bound release factors is proposed. The ATPase activity of UPF1 is required for disassembly of mRNPs undergoing NMD. Together with UPF2 and dependent on TDRD6, mediates the degradation of mRNA harboring long 3'UTR by inducing the NMD machinery. Also capable of unwinding double-stranded DNA and translocating on single-stranded DNA. The protein is Regulator of nonsense transcripts 1 of Mus musculus (Mouse).